We begin with the raw amino-acid sequence, 329 residues long: MSQIVVCAMYKFVTLEDFEAMRQPLLDTMIKNNVKGTLLLANEGINGTVAGTRESIDNLLAYLKSDPRLVDIDYKESYHQEMPFYRSKVKLKKEIVTLGVDEIDPNKICGKYVEPKDWNDLISDPETVLIDTRNEYEIEIGTFKNAINPHTENFREFPQYVDENLDPKKHKKVAMFCTGGIRCEKSTALLKAKGFDEVYHLKGGILKYLEEVPKEKSMWQGECFVFDSRVAVNHDLEKGNYDQCFACRMPITEDDKKRPEYVKGISCHHCYDKVTEKQKARFAEREKQSQLAAEKGFSHIGDEAKKLAQLNKQKKQQAKEAARKKTEKN.

Positions 123–217 constitute a Rhodanese domain; the sequence is SDPETVLIDT…YLEEVPKEKS (95 aa). The active-site Cysteine persulfide intermediate is the cysteine 177. A disordered region spans residues 310-329; the sequence is LNKQKKQQAKEAARKKTEKN. Over residues 317–329 the composition is skewed to basic and acidic residues; it reads QAKEAARKKTEKN.

This sequence belongs to the TrhO family.

The catalysed reaction is uridine(34) in tRNA + AH2 + O2 = 5-hydroxyuridine(34) in tRNA + A + H2O. Functionally, catalyzes oxygen-dependent 5-hydroxyuridine (ho5U) modification at position 34 in tRNAs. This chain is tRNA uridine(34) hydroxylase, found in Francisella tularensis subsp. novicida (strain U112).